The primary structure comprises 41 residues: Photosystem I reaction center subunit VIII (41 aa).

Residues 12 to 32 (WIMIPVTCWLFPVVVMGLLFI) traverse the membrane as a helical segment.

It belongs to the PsaI family.

The protein resides in the cellular thylakoid membrane. In terms of biological role, may help in the organization of the PsaL subunit. The chain is Photosystem I reaction center subunit VIII from Cyanothece sp. (strain PCC 7425 / ATCC 29141).